The sequence spans 345 residues: Large ribosomal subunit protein uL10 (345 aa).

Residues 303–345 form a disordered region; that stretch reads SLPQTAAPQQTPQPTEAPKEEAQEEKKEGPSEEEIAGSLASLF. Low complexity predominate over residues 305-318; that stretch reads PQTAAPQQTPQPTE. The span at 319–332 shows a compositional bias: basic and acidic residues; the sequence is APKEEAQEEKKEGP.

It belongs to the universal ribosomal protein uL10 family. Part of the 50S ribosomal subunit. Forms part of the ribosomal stalk which helps the ribosome interact with GTP-bound translation factors. Forms a heptameric L10(L12)2(L12)2(L12)2 complex, where L10 forms an elongated spine to which the L12 dimers bind in a sequential fashion.

Functionally, forms part of the ribosomal stalk, playing a central role in the interaction of the ribosome with GTP-bound translation factors. The sequence is that of Large ribosomal subunit protein uL10 from Pyrobaculum aerophilum (strain ATCC 51768 / DSM 7523 / JCM 9630 / CIP 104966 / NBRC 100827 / IM2).